A 290-amino-acid polypeptide reads, in one-letter code: 33 kDa chaperonin (290 aa).

Intrachain disulfides connect cysteine 235–cysteine 237 and cysteine 268–cysteine 271.

The protein belongs to the HSP33 family. In terms of processing, under oxidizing conditions two disulfide bonds are formed involving the reactive cysteines. Under reducing conditions zinc is bound to the reactive cysteines and the protein is inactive.

It is found in the cytoplasm. Redox regulated molecular chaperone. Protects both thermally unfolding and oxidatively damaged proteins from irreversible aggregation. Plays an important role in the bacterial defense system toward oxidative stress. The sequence is that of 33 kDa chaperonin from Streptococcus uberis (strain ATCC BAA-854 / 0140J).